Here is a 101-residue protein sequence, read N- to C-terminus: Ferredoxin Fdx2 (101 aa).

4Fe-4S ferredoxin-type domains are found at residues 1–29 (MATY…EGDE) and 31–64 (YVID…PNPQ). [4Fe-4S] cluster is bound by residues Cys9, Cys12, Cys15, Cys19, Cys38, Cys41, Cys50, and Cys54.

The cofactor is [4Fe-4S] cluster.

In terms of biological role, ferredoxins are iron-sulfur proteins that transfer electrons in a wide variety of metabolic reactions. Fdx2 can receive electrons from both FdR_A and FdR_B ferredoxin reductases, with a preference for FdR_B compared with FdR_A, and transfer the electrons to the cytochrome P450 CYP260A1. This chain is Ferredoxin Fdx2, found in Sorangium cellulosum (strain So ce56) (Polyangium cellulosum (strain So ce56)).